The sequence spans 590 residues: Aspartate--tRNA ligase (590 aa).

Glu-174 is an L-aspartate binding site. Residues Gln-198–Lys-201 are aspartate. Arg-220 contributes to the L-aspartate binding site. Residues Arg-220–Glu-222 and Gln-229 each bind ATP. His-443 contributes to the L-aspartate binding site. Glu-484 contributes to the ATP binding site. Arg-491 lines the L-aspartate pocket. An ATP-binding site is contributed by Gly-536–Arg-539.

It belongs to the class-II aminoacyl-tRNA synthetase family. Type 1 subfamily. Homodimer.

The protein resides in the cytoplasm. It catalyses the reaction tRNA(Asp) + L-aspartate + ATP = L-aspartyl-tRNA(Asp) + AMP + diphosphate. In terms of biological role, catalyzes the attachment of L-aspartate to tRNA(Asp) in a two-step reaction: L-aspartate is first activated by ATP to form Asp-AMP and then transferred to the acceptor end of tRNA(Asp). The protein is Aspartate--tRNA ligase of Lactococcus lactis subsp. lactis (strain IL1403) (Streptococcus lactis).